The chain runs to 73 residues: Conotoxin im23b (73 aa).

A signal peptide spans 1 to 22 (MIMRMTLTLFVLVVMTAASASG). Residues 23-28 (DALTEA) constitute a propeptide that is removed on maturation. 3 cysteine pairs are disulfide-bonded: Cys-34/Cys-41, Cys-45/Cys-55, and Cys-56/Cys-71.

This sequence belongs to the conotoxin K superfamily. Expressed by the venom duct.

The protein resides in the secreted. In terms of biological role, neurotoxin that induces excitatory symptoms in mice following intracranial administration. No symptoms are observed after intraperitoneal and intravenous (tail vein) injections. This is Conotoxin im23b from Conus imperialis (Imperial cone).